The primary structure comprises 136 residues: Protein PsiE (136 aa).

4 consecutive transmembrane segments (helical) span residues I15–L35, Y55–V75, H83–V103, and P108–C128.

Belongs to the PsiE family.

The protein localises to the cell inner membrane. The chain is Protein PsiE from Salmonella agona (strain SL483).